The following is a 359-amino-acid chain: Trans-enoyl reductase FSL5 (359 aa).

An NADP(+)-binding site is contributed by 47–50 (IDGK). A substrate-binding site is contributed by 134 to 141 (SGVGTIGL). Residues 169 to 172 (STAT), 192 to 195 (SPHN), tyrosine 210, and 257 to 258 (LE) each bind NADP(+). A substrate-binding site is contributed by 277 to 281 (GPTLL). 346-347 (VS) serves as a coordination point for NADP(+).

The protein belongs to the zinc-containing alcohol dehydrogenase family. In terms of assembly, monomer.

It participates in secondary metabolite biosynthesis. Functionally, trans-enoyl reductase; part of the gene cluster that mediates the biosynthesis of fusarielins F, G and H, decaketide compounds with 5 methylations and a decaline core that act as mycoestrogens as they stimulate growth of MCF-7 breast cancer cells. The initial compound in the pathway is produced by the reducing polyketide synthase FSL1. FSL1 lacks an active enoyl reductase (ER) domain and biosynthesis of fusarielins relies on the trans-acting enoyl reductase FSL5, before it is released through hydrolysis catalyzed by the thioesterase FSL2. Fusarielins F, G, and H have a C11=C12 cis double bond and is fully reduced between C10 and C11 and between C12 and C13. FSL3 can be involved in the formation of the C11=C12 cis double bond by moving a hypothetical C10=C11 or C12=C13 trans double bond to form prefusarielin. Prefusarielin is oxygenated at C15 and C16 by the cytochrome P450 monooxygenase FSL4, resulting in fusarielin F, which subsequently is epoxidized into fusarielin G by the same enzyme. The final step in the pathway is a reduction of the carboxylic acid moiety to yield fusarielin H via a still undetermined mechanism. This Gibberella zeae (strain ATCC MYA-4620 / CBS 123657 / FGSC 9075 / NRRL 31084 / PH-1) (Wheat head blight fungus) protein is Trans-enoyl reductase FSL5.